A 365-amino-acid polypeptide reads, in one-letter code: Peptide chain release factor 2 (365 aa).

Position 252 is an N5-methylglutamine (Gln-252).

This sequence belongs to the prokaryotic/mitochondrial release factor family. Methylated by PrmC. Methylation increases the termination efficiency of RF2.

It is found in the cytoplasm. Its function is as follows. Peptide chain release factor 2 directs the termination of translation in response to the peptide chain termination codons UGA and UAA. The polypeptide is Peptide chain release factor 2 (Tolumonas auensis (strain DSM 9187 / NBRC 110442 / TA 4)).